Reading from the N-terminus, the 297-residue chain is Nucleotide-binding protein Bphyt_0592 (297 aa).

Gly-8 to Ser-15 serves as a coordination point for ATP. Residue Asp-57 to Ser-60 coordinates GTP.

This sequence belongs to the RapZ-like family.

In terms of biological role, displays ATPase and GTPase activities. This Paraburkholderia phytofirmans (strain DSM 17436 / LMG 22146 / PsJN) (Burkholderia phytofirmans) protein is Nucleotide-binding protein Bphyt_0592.